We begin with the raw amino-acid sequence, 366 residues long: MIRTEEMLLNVGPQHPSTHGVFRLVIKIDGEIIKEATPVIGYLHRGTEKIAESLQYTQIIPYTDRMDYLSAMTNNYVICHAVETMMGLEIPERAEYLRVLAMELGRIASHLVWWGTNLLDIGAVSPFLYAFREREMIINLLNELCGARLTFNYMRVGGVKWDAPDGWIEKVEEFVPYMREQLAGYHDLVSGNEIFLNRVKGVGIYSEEDAISYSLSGANLRCTGVNWDLRKDEPYSIYDRFDFHIPVGSVGDAWDRYVCRMQEIEESLKIVEQAVQQFPKEGAVLAKVPKIIKAPKGEAFVRIESPRGEIGCYIASDGKKEPYRLKFRRPSFYNLQILPKLLKGENIANLITILGGVDIVLGEVDG.

This sequence belongs to the complex I 49 kDa subunit family. As to quaternary structure, NDH-1 is composed of 14 different subunits. Subunits NuoB, C, D, E, F, and G constitute the peripheral sector of the complex.

The protein resides in the cell membrane. It catalyses the reaction a quinone + NADH + 5 H(+)(in) = a quinol + NAD(+) + 4 H(+)(out). Its function is as follows. NDH-1 shuttles electrons from NADH, via FMN and iron-sulfur (Fe-S) centers, to quinones in the respiratory chain. The immediate electron acceptor for the enzyme in this species is believed to be a menaquinone. Couples the redox reaction to proton translocation (for every two electrons transferred, four hydrogen ions are translocated across the cytoplasmic membrane), and thus conserves the redox energy in a proton gradient. This Bacillus cereus (strain ZK / E33L) protein is NADH-quinone oxidoreductase subunit D.